Consider the following 401-residue polypeptide: Glucose-6-phosphate isomerase (401 aa).

The Proton donor role is filled by glutamate 261. Residues histidine 282 and lysine 392 contribute to the active site.

It belongs to the GPI family. Homodimer.

The protein resides in the cytoplasm. The enzyme catalyses alpha-D-glucose 6-phosphate = beta-D-fructose 6-phosphate. Its pathway is carbohydrate biosynthesis; gluconeogenesis. It participates in carbohydrate degradation; glycolysis; D-glyceraldehyde 3-phosphate and glycerone phosphate from D-glucose: step 2/4. Competively inhibited by 6-phosphogluconate and erythrose 4-phosphate. Functionally, catalyzes the isomerization of glucose-6-P to fructose-6-P. The protein is Glucose-6-phosphate isomerase of Methanocaldococcus jannaschii (strain ATCC 43067 / DSM 2661 / JAL-1 / JCM 10045 / NBRC 100440) (Methanococcus jannaschii).